The following is a 146-amino-acid chain: Putative phosphotransferase enzyme IIA component YadI (146 aa).

Residues 1-124 (MLGWVITCHD…RIVELGAPEV (124 aa)) enclose the PTS EIIA type-4 domain. His9 acts as the Tele-phosphohistidine intermediate in catalysis.

It is found in the cytoplasm. Functionally, the phosphoenolpyruvate-dependent sugar phosphotransferase system (sugar PTS), a major carbohydrate active -transport system, catalyzes the phosphorylation of incoming sugar substrates concomitantly with their translocation across the cell membrane. This chain is Putative phosphotransferase enzyme IIA component YadI (yadI), found in Escherichia coli (strain K12).